Consider the following 1103-residue polypeptide: MNHQQQQQQQQKAGEQQLSEPEDMEMEAGDTDDPPRITQNPVINGNVTLSDGHSNAEEDMEDDTSWRSEATFQFTVERFSRLSESVLSPPCFVRNLPWKIMVMPRFYPDRPHQKSVGFFLQCNAESDSTSWSCHAQAVLKIINYRDDDKSFSRRISHLFFHEENDWGFSNFMAWSEVTDPEKGFIDDDKVTFEVFVQADAPHGVAWDSKKHTGYVGLKNQGATCYMNSLLQTLFFTNQLRKAVYMMPTEGDDSSKSVPLALQRVFYELQHSDKPVGTKKLTKSFGWETLDSFMQHDVQELCRVLLDNVENKMKGTCVEGTIPKLFRGKMVSYIQCKDVDYRSDRREDYYDIQLSIKGKKNIFESFVDYVAVEQLDGDNKYDAGEHGLQEAEKGVKFLTLPPVLHLQLMRFMYDPQTDQNIKINDRFEFPEQLPLDEFLQKTDPKDPANYILHAVLVHSGDNHGGHYVVYLNPKGDGKWCKFDDDVVSRCTKEEAIEHNYGGHDDDLSVRHCTNAYMLVYIRESKLSEVLQAVTDHDIPQQLVERLQEEKRIEAQKRKERQEAHLYMQVQIVAEDQFCGHQGNDMYDEEKVRYTVFKVLKNSSLAEFVQSLSQTMGFPQDQIRLWPMQARSNGTKRPAMLDNEADGNKTMIELSDNENPWTIFLETVDPELAASGATLPKFDKDHDVMLFLKMYDPKTRSLNYCGHIYTPISCKIRDLLPVMCDRAGFIQDTSLILYEEVKPNLTERIQDYDVSLDKALDELMDGDIIVFQKDDPENDNSELPTAKEYFRDLYHRVDVIFCDKTIPNDPGFVVTLSNRMNYFQVAKTVAQRLNTDPMLLQFFKSQGYRDGPGNPLRHNYEGTLRDLLQFFKPRQPKKLYYQQLKMKITDFENRRSFKCIWLNSQFREEEITLYPDKHGCVRDLLEECKKAVELGDKASGRLRLLEIVSYKIIGVHQEDELLECLSPATSRTFRIEEIPLDQVDIDKENEMLITVAHFHKEVFGTFGIPFLLRIHQGEHFREVMKRIQSLLDIQEKEFEKFKFAIVMMGRHQYINEDEYEVNLKDFEPQPGNMSHPRPWLGLDHFNKAPKRSRYTYLEKAIKIHN.

Residues M1–Q11 are compositionally biased toward low complexity. Disordered regions lie at residues M1 to P41 and N46 to S65. The interval M1–K209 is interaction with TSPYL5. S19 is subject to Phosphoserine. Positions E20–D32 are enriched in acidic residues. 2 positions are modified to phosphoserine: S50 and S54. The interval S54 to K209 is interaction with p53/TP53 and MDM2. The 128-residue stretch at E69 to V196 folds into the MATH domain. The segment at T71–W206 is necessary for nuclear localization. The 308-residue stretch at V215–E522 folds into the USP domain. The Nucleophile role is filled by C224. Catalysis depends on H465, which acts as the Proton acceptor. N6-acetyllysine; alternate is present on K870. K870 participates in a covalent cross-link: Glycyl lysine isopeptide (Lys-Gly) (interchain with G-Cter in SUMO2); alternate. A Glycyl lysine isopeptide (Lys-Gly) (interchain with G-Cter in ubiquitin); alternate cross-link involves residue K870. K883 participates in a covalent cross-link: Glycyl lysine isopeptide (Lys-Gly) (interchain with G-Cter in SUMO2). S964 is modified (phosphoserine). 2 positions are modified to N6-acetyllysine: K1085 and K1097.

The protein belongs to the peptidase C19 family. Monomer. Homodimer. Part of a complex with DAXX, MDM2, RASSF1 and USP7. Part of a complex with DAXX, MDM2 and USP7. Interacts with MDM2; the interaction is independent of p53/TP53. Interacts with DAXX; the interaction is direct and independent of MDM2 and p53/TP53. Component of a complex composed of KMT2E, OGT and USP7; the complex stabilizes KMT2E, preventing KMT2E ubiquitination and proteasomal-mediated degradation. Interacts (via MATH domain) with KMT2E. Interacts with OGT. Interacts with FOXO4; the interaction is enhanced in presence of hydrogen peroxide and occurs independently of p53/TP53. Interacts with p53/TP53; the interaction is enhanced in response to DNA damage; the interaction is impaired by TSPYL5. Interacts with PTEN; the interaction is direct. Interacts with ATXN1 and the strength of interaction is influenced by the length of the poly-Gln region in ATXN1. A weaker interaction seen with mutants having longer poly-Gln regions. Interacts with KIAA1530/UVSSA. Interacts with MEX3C and antagonizes its ability to degrade mRNA. Interacts with DNMT1 and UHRF1. Interacts with FOXP3. Interacts (via MATH domain) with RNF220. Associated component of the Polycomb group (PcG) multiprotein PRC1-like complex. Interacts with EPOP. Interacts with OTUD4 and USP9X; the interaction is direct. Interacts with CRY2. Interacts with REST. Interacts with ERCC6. Part of a complex consisting of USP7, MAGEL2 and TRIM27; directly interacts with MAGEL2; directly interacts with TRIM27. Polyneddylated. In terms of processing, not sumoylated. Post-translationally, polyubiquitinated. Ubiquitinated at Lys-870. In terms of tissue distribution, widely expressed. High expression is detected in brain, bone marrow, thymus and testis.

It is found in the nucleus. The protein localises to the cytoplasm. Its subcellular location is the PML body. The protein resides in the chromosome. It carries out the reaction Thiol-dependent hydrolysis of ester, thioester, amide, peptide and isopeptide bonds formed by the C-terminal Gly of ubiquitin (a 76-residue protein attached to proteins as an intracellular targeting signal).. Its function is as follows. Hydrolase that deubiquitinates target proteins such as ARMC5, FOXO4, DEPTOR, KAT5, p53/TP53, MDM2, ERCC6, DNMT1, UHRF1, PTEN, KMT2E/MLL5 and DAXX. Together with DAXX, prevents MDM2 self-ubiquitination and enhances the E3 ligase activity of MDM2 towards p53/TP53, thereby promoting p53/TP53 ubiquitination and proteasomal degradation. Deubiquitinates p53/TP53, preventing degradation of p53/TP53, and enhances p53/TP53-dependent transcription regulation, cell growth repression and apoptosis. Deubiquitinates p53/TP53 and MDM2 and strongly stabilizes p53/TP53 even in the presence of excess MDM2, and also induces p53/TP53-dependent cell growth repression and apoptosis. Deubiquitination of FOXO4 in presence of hydrogen peroxide is not dependent on p53/TP53 and inhibits FOXO4-induced transcriptional activity. In association with DAXX, is involved in the deubiquitination and translocation of PTEN from the nucleus to the cytoplasm, both processes that are counteracted by PML. Deubiquitinates KMT2E preventing KMT2E proteasomal-mediated degradation. Involved in cell proliferation during early embryonic development. Involved in transcription-coupled nucleotide excision repair (TC-NER) in response to UV damage: recruited to DNA damage sites following interaction with KIAA1530/UVSSA and promotes deubiquitination of ERCC6, preventing UV-induced degradation of ERCC6. Involved in maintenance of DNA methylation via its interaction with UHRF1 and DNMT1: acts by mediating deubiquitination of UHRF1 and DNMT1, preventing their degradation and promoting DNA methylation by DNMT1. Deubiquitinates alkylation repair enzyme ALKBH3. OTUD4 recruits USP7 and USP9X to stabilize ALKBH3, thereby promoting the repair of alkylated DNA lesions. Acts as a chromatin regulator via its association with the Polycomb group (PcG) multiprotein PRC1-like complex; may act by deubiquitinating components of the PRC1-like complex. Able to mediate deubiquitination of histone H2B; it is however unsure whether this activity takes place in vivo. Exhibits a preference towards 'Lys-48'-linked ubiquitin chains. Increases regulatory T-cells (Treg) suppressive capacity by deubiquitinating and stabilizing the transcription factor FOXP3 which is crucial for Treg cell function. Plays a role in the maintenance of the circadian clock periodicity via deubiquitination and stabilization of the CRY1 and CRY2 proteins. Deubiquitinates REST, thereby stabilizing REST and promoting the maintenance of neural progenitor cells. Deubiquitinates SIRT7, inhibiting SIRT7 histone deacetylase activity and regulating gluconeogenesis. Involved in the regulation of WASH-dependent actin polymerization at the surface of endosomes and the regulation of endosomal protein recycling. It maintains optimal WASH complex activity and precise F-actin levels via deubiquitination of TRIM27 and WASHC1. Mediates the deubiquitination of phosphorylated DEPTOR, promoting its stability and leading to decreased mTORC1 signaling. The chain is Ubiquitin carboxyl-terminal hydrolase 7 (Usp7) from Mus musculus (Mouse).